Reading from the N-terminus, the 186-residue chain is Der GTPase-activating protein YihI (186 aa).

The tract at residues 39–77 (LDAKAREDKKKRKHKGLASGSRHSAVEEKANKLQNEIKD) is disordered. Residues 62-77 (SAVEEKANKLQNEIKD) show a composition bias toward basic and acidic residues.

The protein belongs to the YihI family. As to quaternary structure, interacts with Der.

Its function is as follows. A GTPase-activating protein (GAP) that modifies Der/EngA GTPase function. May play a role in ribosome biogenesis. The chain is Der GTPase-activating protein YihI from Haemophilus influenzae (strain 86-028NP).